Consider the following 117-residue polypeptide: uncharacterized protein (117 aa).

The N-terminal stretch at 1–22 (MHVKYLAGIVGAALLMAGCSSS) is a signal peptide.

This is an uncharacterized protein from Escherichia coli O6:H1 (strain CFT073 / ATCC 700928 / UPEC).